Consider the following 143-residue polypeptide: Hemoglobin subunit alpha-2 (143 aa).

At Ser-2 the chain carries N-acetylserine. The region spanning 2–143 is the Globin domain; it reads SLSTKDKDTV…LARALSEKYR (142 aa). Heme b-binding residues include His-60 and His-89.

It belongs to the globin family. Hb 2 is a heterotetramer of two alpha-2 and two beta chains. Red blood cells.

In terms of biological role, involved in oxygen transport from gills to the various peripheral tissues. In Cottoperca gobio (Frogmouth), this protein is Hemoglobin subunit alpha-2.